A 779-amino-acid polypeptide reads, in one-letter code: Vezatin (779 aa).

A run of 2 helical transmembrane segments spans residues 139–159 (LATP…LLVM) and 162–182 (TWWI…YLVI). Residues 430–462 (VRSLQLHLKALLNEVIILEDELEKLVCTKETQE) are a coiled coil. Disordered stretches follow at residues 618–719 (PVDP…DSLQ) and 757–779 (EQTF…IEEK). Positions 625–634 (ISNSEPSMNS) are enriched in polar residues. A compositionally biased stretch (basic and acidic residues) spans 638 to 649 (KVSKNDTEEESN). The segment covering 706–719 (GLTTAPPTPRDSLQ) has biased composition (polar residues). A compositionally biased stretch (basic and acidic residues) spans 770-779 (EENKNEIEEK).

This sequence belongs to the vezatin family. As to quaternary structure, interacts with USH2A (via the cytoplasmic region); the interaction associates VEZT with the USH2 complex at the stereocilia base. Interacts with myosin MYO7A and the cadherin-catenins complex.

The protein localises to the cell membrane. The protein resides in the cell projection. It localises to the stereocilium membrane. It is found in the cell junction. Its subcellular location is the adherens junction. The protein localises to the nucleus. The protein resides in the cytoplasmic vesicle. It localises to the secretory vesicle. It is found in the acrosome. In terms of biological role, plays a pivotal role in the establishment of adherens junctions and their maintenance in adult life. Required for morphogenesis of the preimplantation embryo, and for the implantation process. Its function is as follows. (Microbial infection) In case of Listeria infection, promotes bacterial internalization by participating in myosin VIIa recruitment to the entry site. This Homo sapiens (Human) protein is Vezatin (VEZT).